The chain runs to 473 residues: H(+)/Cl(-) exchange transporter ClcA (473 aa).

Residues 1–32 are Cytoplasmic-facing; the sequence is MKTDTSTFLAQQIVRLRRRDQIRRLMQRDKTP. The helical transmembrane segment at 33–69 threads the bilayer; the sequence is LAILFMAAVVGTLTGLVGVAFEKAVSWVQNMRIGALV. At 70 to 76 the chain is on the periplasmic side; that stretch reads QVADHAF. Residues 77 to 100 traverse the membrane as a helical segment; the sequence is LLWPLAFILSALLAMVGYFLVRKF. The Selectivity filter part_1 signature appears at 106 to 110; it reads GSGIP. S107 contacts chloride. Positions 109 to 116 form an intramembrane region, helical; that stretch reads IPEIEGAL. Topologically, residues 117 to 123 are cytoplasmic; that stretch reads EELRPVR. The next 2 helical transmembrane spans lie at 124-141 and 148-166; these read WWRV…TLGA and EGPT…LDVF. The Selectivity filter part_2 signature appears at 146-150; that stretch reads GREGP. Residues 167–176 are Cytoplasmic-facing; it reads RMRSAEARHT. Positions 177-189 form an intramembrane region, helical; the sequence is LLATGAAAGLSAA. Residues 190-192 constitute an intramembrane region (note=Loop between two helices); that stretch reads FNA. Positions 193–201 form an intramembrane region, helical; the sequence is PLAGILFII. The Cytoplasmic segment spans residues 202-214; sequence EEMRPQFRYNLIS. A helical transmembrane segment spans residues 215-232; that stretch reads IKAVFTGVIMSSIVFRIF. The Periplasmic portion of the chain corresponds to 233–252; sequence NGEAPIIEVGKLSDAPVNTL. A helical transmembrane segment spans residues 253–281; the sequence is WLYLILGIIFGCVGPVFNSLVLRTQDMFQ. Topologically, residues 282–287 are cytoplasmic; it reads RFHGGE. Residues 288-308 form a helical membrane-spanning segment; that stretch reads IKKWVLMGGAIGGLCGILGLI. At 309 to 329 the chain is on the periplasmic side; the sequence is EPAAAGGGFNLIPIAAAGNFS. A helical membrane pass occupies residues 330-349; the sequence is VGLLLFIFITRVVTTLLCFS. Topologically, residues 350-354 are cytoplasmic; sequence SGAPG. Positions 355 to 359 match the Selectivity filter part_3 motif; sequence GIFAP. The chain crosses the membrane as a helical span at residues 355–378; that stretch reads GIFAPMLALGTLLGTAFGMAAAVL. The chloride site is built by I356 and F357. The Periplasmic segment spans residues 379–386; it reads FPQYHLEA. The segment at residues 387 to 401 is an intramembrane region (helical); sequence GTFAIAGMGALMAAS. An intramembrane region (note=Loop between two helices) is located at residues 402-404; the sequence is VRA. The helical intramembrane region spans 405 to 416; sequence PLTGIVLVLEMT. The note=Loop between two helices intramembrane region spans 417-421; sequence DNYQL. A helical membrane pass occupies residues 422–438; that stretch reads ILPMIITCLGATLLAQF. The Cytoplasmic portion of the chain corresponds to 439–473; that stretch reads LGGKPLYSTILARTLAKQDAEQAEKNQNAPADENT. Y445 is a binding site for chloride.

This sequence belongs to the chloride channel (TC 2.A.49) family. ClcA subfamily. Homodimer.

The protein localises to the cell inner membrane. The enzyme catalyses 2 chloride(in) + H(+)(out) = 2 chloride(out) + H(+)(in). Its function is as follows. Proton-coupled chloride transporter. Functions as antiport system and exchanges two chloride ions for 1 proton. Probably acts as an electrical shunt for an outwardly-directed proton pump that is linked to amino acid decarboxylation, as part of the extreme acid resistance (XAR) response. This Salmonella typhimurium (strain LT2 / SGSC1412 / ATCC 700720) protein is H(+)/Cl(-) exchange transporter ClcA (clcA).